Reading from the N-terminus, the 131-residue chain is Hypocretin neuropeptide precursor (131 aa).

At Gln34 the chain carries Pyrrolidone carboxylic acid. Cystine bridges form between Cys39-Cys45 and Cys40-Cys47. At Leu66 the chain carries Leucine amide. Positions 104 to 131 are disordered; the sequence is EPALRPCSGRRCPSEAASSVAPGGRSGV.

The protein belongs to the orexin family.

Its subcellular location is the rough endoplasmic reticulum. The protein localises to the cytoplasmic vesicle. It is found in the synapse. Neuropeptides that play a significant role in the regulation of food intake and sleep-wakefulness, possibly by coordinating the complex behavioral and physiologic responses of these complementary homeostatic functions. A broader role in the homeostatic regulation of energy metabolism, autonomic function, hormonal balance and the regulation of body fluids, is also suggested. Functionally, binds to orexin receptors HCRTR1/OX1R and HCRTR2/OX2R with a high affinity. Stimulates food intake. Modulates pituitary luteinizing hormone secretion in an ovarian steroid-dependent manner. In terms of biological role, binds to orexin receptor HCRTR2/OX2R only. Stimulates food intake. Modulates pituitary luteinizing hormone secretion in an ovarian steroid-dependent manner. The sequence is that of Hypocretin neuropeptide precursor (HCRT) from Bos taurus (Bovine).